Reading from the N-terminus, the 395-residue chain is S-adenosylmethionine synthase (395 aa).

Histidine 12 contacts ATP. A Mg(2+)-binding site is contributed by aspartate 14. A K(+)-binding site is contributed by glutamate 40. L-methionine is bound by residues glutamate 53 and glutamine 96. Residues 96 to 106 form a flexible loop region; sequence QSKEIADAVNF. Residues 174 to 176, 242 to 243, aspartate 251, 257 to 258, alanine 274, and lysine 278 each bind ATP; these read DGK, RF, and RK. Position 251 (aspartate 251) interacts with L-methionine. Lysine 282 serves as a coordination point for L-methionine.

This sequence belongs to the AdoMet synthase family. In terms of assembly, homotetramer; dimer of dimers. Mg(2+) serves as cofactor. It depends on K(+) as a cofactor.

The protein localises to the cytoplasm. The catalysed reaction is L-methionine + ATP + H2O = S-adenosyl-L-methionine + phosphate + diphosphate. Its pathway is amino-acid biosynthesis; S-adenosyl-L-methionine biosynthesis; S-adenosyl-L-methionine from L-methionine: step 1/1. Catalyzes the formation of S-adenosylmethionine (AdoMet) from methionine and ATP. The overall synthetic reaction is composed of two sequential steps, AdoMet formation and the subsequent tripolyphosphate hydrolysis which occurs prior to release of AdoMet from the enzyme. This chain is S-adenosylmethionine synthase, found in Tropheryma whipplei (strain Twist) (Whipple's bacillus).